The following is a 503-amino-acid chain: ATP synthase subunit alpha (503 aa).

Gly170–Thr177 provides a ligand contact to ATP.

This sequence belongs to the ATPase alpha/beta chains family. In terms of assembly, F-type ATPases have 2 components, CF(1) - the catalytic core - and CF(0) - the membrane proton channel. CF(1) has five subunits: alpha(3), beta(3), gamma(1), delta(1), epsilon(1). CF(0) has three main subunits: a(1), b(2) and c(9-12). The alpha and beta chains form an alternating ring which encloses part of the gamma chain. CF(1) is attached to CF(0) by a central stalk formed by the gamma and epsilon chains, while a peripheral stalk is formed by the delta and b chains.

The protein resides in the cell inner membrane. The enzyme catalyses ATP + H2O + 4 H(+)(in) = ADP + phosphate + 5 H(+)(out). Produces ATP from ADP in the presence of a proton gradient across the membrane. The alpha chain is a regulatory subunit. This chain is ATP synthase subunit alpha, found in Aquifex aeolicus (strain VF5).